Reading from the N-terminus, the 298-residue chain is MTDATTISPLDQARILSEALPHMQEYDDETIVIKYGGHAMGDEDTAKAFARDIVLLEQTAINPVVVHGGGPQIATMLKRLGIVSEFAAGLRITDAATIEIVEMVLAGSINKQLVGYINEAGGKAVGLCGKDGNMVRAVKATRTMVDPDSHIEKVVDLGFVGEPDKVDLTLLNQLIGYELIPVLAPLATSKEGQTFNVNADTFAGAVAGALKAKRLLLLTDVPGVLDKSKKLIPEISIKDARKLIADGTISGGMIPKVETCIYALEQGVQGVVILDGKVPHAVLLELFTNQGTGTLIHK.

Residues 69–70 (GG), arginine 91, and asparagine 196 each bind substrate.

It belongs to the acetylglutamate kinase family. ArgB subfamily.

The protein resides in the cytoplasm. The catalysed reaction is N-acetyl-L-glutamate + ATP = N-acetyl-L-glutamyl 5-phosphate + ADP. Its pathway is amino-acid biosynthesis; L-arginine biosynthesis; N(2)-acetyl-L-ornithine from L-glutamate: step 2/4. Functionally, catalyzes the ATP-dependent phosphorylation of N-acetyl-L-glutamate. The polypeptide is Acetylglutamate kinase (Bradyrhizobium sp. (strain ORS 278)).